The sequence spans 616 residues: Pentatricopeptide repeat-containing protein At4g15720 (616 aa).

PPR repeat units follow at residues 63 to 93, 94 to 128, 130 to 164, 165 to 199, 200 to 228, 235 to 269, 270 to 300, 301 to 335, 336 to 371, and 372 to 402; these read DTFT…MCEP, NVVS…RPVP, NEYT…GLRR, NIVV…GRNV, VSWT…FNAA, NQFM…GYES, NTVV…IRCH, SVIS…RINP, NYVT…GVVP, and DSRH…IEVG. The segment at 409–484 is type E motif; the sequence is LWGALLSAGR…ERACSWIENK (76 aa). A type E(+) motif region spans residues 485-515; the sequence is DSVYVFHAGDLSCDESGEIERFLKDLEKRMK. The interval 522–616 is type DYW motif; sequence SSSMITTSSS…NGSCTCRDYW (95 aa).

Belongs to the PPR family. PCMP-H subfamily.

This is Pentatricopeptide repeat-containing protein At4g15720 (PCMP-H1) from Arabidopsis thaliana (Mouse-ear cress).